Consider the following 397-residue polypeptide: Zinc finger transcription factor family protein 30 (397 aa).

The interval 1–40 is disordered; sequence MKLEDDKIHSPTNTEEEGYGSDVEVENGTDISGSKGGSGV. The segment covering 14-27 has biased composition (acidic residues); it reads TEEEGYGSDVEVEN. C2H2-type zinc fingers lie at residues 51 to 74, 78 to 102, and 107 to 125; these read FRCSICSKVFCHSSSLSRHRMQAH, YKCTVCRKDISSSESLRTHMFKQHH, and YMCRCCNWAFPDKSLLHIH.

The protein localises to the nucleus. The sequence is that of Zinc finger transcription factor family protein 30 (ztf-30) from Caenorhabditis elegans.